We begin with the raw amino-acid sequence, 147 residues long: Hemoglobin subunit delta (147 aa).

The region spanning 3–147 (HLTADEKAAV…VAAALAHKYH (145 aa)) is the Globin domain. Heme b contacts are provided by His-64 and His-93.

Belongs to the globin family. As to quaternary structure, heterotetramer of two delta chains and two alpha chains. Red blood cells.

This is Hemoglobin subunit delta (HBD) from Carlito syrichta (Philippine tarsier).